We begin with the raw amino-acid sequence, 444 residues long: Elongation factor 1-alpha (444 aa).

The tr-type G domain maps to 14-235 (KPHLNLAIIG…ALDAIEPPPR (222 aa)). Positions 23–30 (GHVDHGKS) are G1. 23-30 (GHVDHGKS) is a GTP binding site. Ser-30 contributes to the Mg(2+) binding site. The segment at 79–83 (GVTIE) is G2. The tract at residues 100–103 (DLPG) is G3. Residues 100–104 (DLPGH) and 162–165 (NKMD) each bind GTP. Residues 162–165 (NKMD) are G4. A G5 region spans residues 201–203 (SAV).

It belongs to the TRAFAC class translation factor GTPase superfamily. Classic translation factor GTPase family. EF-Tu/EF-1A subfamily.

It localises to the cytoplasm. It catalyses the reaction GTP + H2O = GDP + phosphate + H(+). Its function is as follows. GTP hydrolase that promotes the GTP-dependent binding of aminoacyl-tRNA to the A-site of ribosomes during protein biosynthesis. This Caldivirga maquilingensis (strain ATCC 700844 / DSM 13496 / JCM 10307 / IC-167) protein is Elongation factor 1-alpha.